The chain runs to 412 residues: uncharacterized protein (412 aa).

His49 serves as a coordination point for Zn(2+). Glu52 functions as the Proton acceptor in the catalytic mechanism. Zn(2+)-binding residues include His53 and Glu129.

The protein belongs to the peptidase M16 family. It depends on Zn(2+) as a cofactor.

This is an uncharacterized protein from Rickettsia typhi (strain ATCC VR-144 / Wilmington).